The following is an 837-amino-acid chain: MSRKLFSVLLVGLMLMTSLLVTISSTSAASLPTMPPSGYDQVRNGVPRGQVVNISYFSTATNSTRPARVYLPPGYSKDKKYSVLYLLHGIGGSENDWFEGGGRANVIADNLIAEGKIKPLIIVTPNTNAAGPGIADGYENFTKDLLNSLIPYIESNYSVYTDREHRAIAGLSMGGGQSFNIGLTNLDKFAYIGPISAAPNTYPNERLFPDGGKAAREKLKLLFIACGTNDSLIGFGQRVHEYCVANNINHVYWLIQGGGHDFNVWKPGLWNFLQMADEAGLTRDGNTPVPTPSPKPANTRIEAEDYDGINSSSIEIIGVPPEGGRGIGYITSGDYLVYKSIDFGNGATSFKAKVANANTSNIELRLNGPNGTLIGTLSVKSTGDWNTYEEQTCSISKVTGINDLYLVFKGPVNIDWFTFGVESSSTGLGDLNGDGNINSSDLQALKRHLLGISPLTGEALLRADVNRSGKVDSTDYSVLKRYILRIITEFPGQGDVQTPNPSVTPTQTPIPTISGNALRDYAEARGIKIGTCVNYPFYNNSDPTYNSILQREFSMVVCENEMKFDALQPRQNVFDFSKGDQLLAFAERNGMQMRGHTLIWHNQNPSWLTNGNWNRDSLLAVMKNHITTVMTHYKGKIVEWDVANECMDDSGNGLRSSIWRNVIGQDYLDYAFRYAREADPDALLFYNDYNIEDLGPKSNAVFNMIKSMKERGVPIDGVGFQCHFINGMSPEYLASIDQNIKRYAEIGVIVSFTEIDIRIPQSENPATAFQVQANNYKELMKICLANPNCNTFVMWGFTDKYTWIPGTFPGYGNPLIYDSNYNPKPAYNAIKEALMGY.

A signal peptide spans 1–28 (MSRKLFSVLLVGLMLMTSLLVTISSTSA). Residues 299–420 (TRIEAEDYDG…PVNIDWFTFG (122 aa)) form the CBM6 domain. The Dockerin domain maps to 424–492 (SSTGLGDLNG…ILRIITEFPG (69 aa)). The GH10 domain occupies 512 to 833 (TISGNALRDY…KPAYNAIKEA (322 aa)). Glu645 (proton donor) is an active-site residue. Residue Glu754 is the Nucleophile of the active site. Cys783 and Cys789 are oxidised to a cystine.

The protein belongs to the glycosyl hydrolase 10 (cellulase F) family.

It catalyses the reaction Endohydrolysis of (1-&gt;4)-beta-D-xylosidic linkages in xylans.. This is Endo-1,4-beta-xylanase Z (xynZ) from Acetivibrio thermocellus (strain ATCC 27405 / DSM 1237 / JCM 9322 / NBRC 103400 / NCIMB 10682 / NRRL B-4536 / VPI 7372) (Clostridium thermocellum).